Here is a 37-residue protein sequence, read N- to C-terminus: 24 kDa antigen (37 aa).

The protein is 24 kDa antigen of Plasmodium chabaudi.